A 233-amino-acid chain; its full sequence is MGEPQQVSALPPPPMQYIKEYTDENIQEGLAPKPPPPIKDSYMMFGNQFQCDDLIIRPLESQGIERLHPMQFDHKKELRKLNMSILINFLDLLDILIRSPGSIKREEKLEDLKLLFVHVHHLINEYRPHQARETLRVMMEVQKRQRLETAERFQKHLERVIEMIQNCLASLPDDLPHSEAGMRVKAEPMDADDSNNCTGQSDQQRENSGHRRDQIIEKDAALCVLIDEMNERP.

Residue lysine 185 forms a Glycyl lysine isopeptide (Lys-Gly) (interchain with G-Cter in SUMO1); alternate linkage. Residue lysine 185 forms a Glycyl lysine isopeptide (Lys-Gly) (interchain with G-Cter in SUMO2); alternate linkage. The segment at 188–213 (PMDADDSNNCTGQSDQQRENSGHRRD) is disordered. The residue at position 194 (serine 194) is a Phosphoserine. The span at 203 to 213 (QQRENSGHRRD) shows a compositional bias: basic and acidic residues.

This sequence belongs to the Mediator complex subunit 7 family. As to quaternary structure, component of the Mediator complex, which is composed of MED1, MED4, MED6, MED7, MED8, MED9, MED10, MED11, MED12, MED13, MED13L, MED14, MED15, MED16, MED17, MED18, MED19, MED20, MED21, MED22, MED23, MED24, MED25, MED26, MED27, MED29, MED30, MED31, CCNC, CDK8 and CDC2L6/CDK11. The MED12, MED13, CCNC and CDK8 subunits form a distinct module termed the CDK8 module. Mediator containing the CDK8 module is less active than Mediator lacking this module in supporting transcriptional activation. Individual preparations of the Mediator complex lacking one or more distinct subunits have been variously termed ARC, CRSP, DRIP, PC2, SMCC and TRAP.

It localises to the nucleus. Component of the Mediator complex, a coactivator involved in the regulated transcription of nearly all RNA polymerase II-dependent genes. Mediator functions as a bridge to convey information from gene-specific regulatory proteins to the basal RNA polymerase II transcription machinery. Mediator is recruited to promoters by direct interactions with regulatory proteins and serves as a scaffold for the assembly of a functional preinitiation complex with RNA polymerase II and the general transcription factors. In Sus scrofa (Pig), this protein is Mediator of RNA polymerase II transcription subunit 7 (MED7).